We begin with the raw amino-acid sequence, 342 residues long: UDP-3-O-(3-hydroxymyristoyl)glucosamine N-acyltransferase (342 aa).

Histidine 239 (proton acceptor) is an active-site residue.

It belongs to the transferase hexapeptide repeat family. LpxD subfamily. As to quaternary structure, homotrimer.

The catalysed reaction is a UDP-3-O-[(3R)-3-hydroxyacyl]-alpha-D-glucosamine + a (3R)-hydroxyacyl-[ACP] = a UDP-2-N,3-O-bis[(3R)-3-hydroxyacyl]-alpha-D-glucosamine + holo-[ACP] + H(+). It catalyses the reaction UDP-3-O-[(3R)-3-hydroxytetradecanoyl]-alpha-D-glucosamine + (3R)-hydroxytetradecanoyl-[ACP] = UDP-2-N,3-O-bis[(3R)-3-hydroxytetradecanoyl]-alpha-D-glucosamine + holo-[ACP] + H(+). It participates in glycolipid biosynthesis; lipid IV(A) biosynthesis; lipid IV(A) from (3R)-3-hydroxytetradecanoyl-[acyl-carrier-protein] and UDP-N-acetyl-alpha-D-glucosamine: step 3/6. Catalyzes the N-acylation of UDP-3-O-(hydroxytetradecanoyl)glucosamine using 3-hydroxytetradecanoyl-ACP as the acyl donor. Is involved in the biosynthesis of lipid A, a phosphorylated glycolipid that anchors the lipopolysaccharide to the outer membrane of the cell. This Photorhabdus laumondii subsp. laumondii (strain DSM 15139 / CIP 105565 / TT01) (Photorhabdus luminescens subsp. laumondii) protein is UDP-3-O-(3-hydroxymyristoyl)glucosamine N-acyltransferase.